Here is an 89-residue protein sequence, read N- to C-terminus: Putative regulatory protein CLL_A1210 (89 aa).

Belongs to the RemA family.

The chain is Putative regulatory protein CLL_A1210 from Clostridium botulinum (strain Eklund 17B / Type B).